Consider the following 451-residue polypeptide: Gamma-aminobutyric acid receptor subunit alpha-2 (451 aa).

Residues 1 to 28 (MKTKLSTCNVWSLLLVLLVWDPVRLVLA) form the signal peptide. The Extracellular portion of the chain corresponds to 29-249 (NIQEDEAKNN…MTAHFHLKRK (221 aa)). A glycan (N-linked (GlcNAc...) asparagine) is linked at asparagine 38. Arginine 94 provides a ligand contact to 4-aminobutanoate. Asparagine 138 is a glycosylation site (N-linked (GlcNAc...) asparagine). Position 157 (threonine 157) interacts with 4-aminobutanoate. An intrachain disulfide couples cysteine 166 to cysteine 180. A helical membrane pass occupies residues 250 to 270 (IGYFVIQTYLPCIMTVILSQV). Over 271 to 280 (SFWLNRESVP) the chain is Cytoplasmic. A helical membrane pass occupies residues 281–300 (ARTVFGVTTVLTMTTLSISA). At 301–311 (RNSLPKVAYAT) the chain is on the extracellular side. Residues 312–332 (AMDWFIAVCYAFVFSALIEFA) traverse the membrane as a helical segment. Topologically, residues 333–420 (TVNYFTKRGW…FNSVSKIDRM (88 aa)) are cytoplasmic. Residues 389–408 (KSATTPEPNKKPENKPAEAK) form a disordered region. Residues 396 to 408 (PNKKPENKPAEAK) are compositionally biased toward basic and acidic residues. A helical transmembrane segment spans residues 421–441 (SRIVFPVLFGTFNLVYWATYL). Residues 442 to 451 (NREPVLGVSP) are Extracellular-facing.

It belongs to the ligand-gated ion channel (TC 1.A.9) family. Gamma-aminobutyric acid receptor (TC 1.A.9.5) subfamily. GABRA2 sub-subfamily. In terms of assembly, heteropentamer, formed by a combination of alpha (GABRA1-6), beta (GABRB1-3), gamma (GABRG1-3), delta (GABRD), epsilon (GABRE), rho (GABRR1-3), pi (GABRP) and theta (GABRQ) subunits, each subunit exhibiting distinct physiological and pharmacological properties. Interacts with UBQLN1. Interacts with KIF21B. Interacts with LHFPL4. Interacts with SHISA7; interaction leads to the regulation of GABA(A) receptor trafficking, channel deactivation kinetics and pharmacology. Glycosylated.

The protein localises to the postsynaptic cell membrane. Its subcellular location is the cell membrane. It is found in the cytoplasmic vesicle membrane. The protein resides in the cell projection. It localises to the dendrite. It catalyses the reaction chloride(in) = chloride(out). Activated by pentobarbital. Inhibited by the antagonist bicuculline. In terms of biological role, alpha subunit of the heteropentameric ligand-gated chloride channel gated by gamma-aminobutyric acid (GABA), a major inhibitory neurotransmitter in the brain. GABA-gated chloride channels, also named GABA(A) receptors (GABAAR), consist of five subunits arranged around a central pore and contain GABA active binding site(s) located at the alpha and beta subunit interface(s). When activated by GABA, GABAARs selectively allow the flow of chloride anions across the cell membrane down their electrochemical gradient. Chloride influx into the postsynaptic neuron following GABAAR opening decreases the neuron ability to generate a new action potential, thereby reducing nerve transmission. The alpha-2 subunit exhibits synaptogenic activity together with beta-2 and very little to no activity together with beta-3, the gamma-2 subunit being necessary but not sufficient to induce rapid synaptic contacts formation. The chain is Gamma-aminobutyric acid receptor subunit alpha-2 from Mus musculus (Mouse).